The primary structure comprises 241 residues: Pyrroloquinoline-quinone synthase (241 aa).

The protein belongs to the PqqC family.

It catalyses the reaction 6-(2-amino-2-carboxyethyl)-7,8-dioxo-1,2,3,4,7,8-hexahydroquinoline-2,4-dicarboxylate + 3 O2 = pyrroloquinoline quinone + 2 H2O2 + 2 H2O + H(+). Its pathway is cofactor biosynthesis; pyrroloquinoline quinone biosynthesis. Its function is as follows. Ring cyclization and eight-electron oxidation of 3a-(2-amino-2-carboxyethyl)-4,5-dioxo-4,5,6,7,8,9-hexahydroquinoline-7,9-dicarboxylic-acid to PQQ. This chain is Pyrroloquinoline-quinone synthase, found in Ruegeria pomeroyi (strain ATCC 700808 / DSM 15171 / DSS-3) (Silicibacter pomeroyi).